A 120-amino-acid polypeptide reads, in one-letter code: uncharacterized protein (120 aa).

An N-terminal signal peptide occupies residues 1–22 (MSTSGMLFIFATFCPCFLSCCA). The Extracellular portion of the chain corresponds to 23–59 (FMSHWKLKDFSFRFLRMCGERSLVVCYPLKLLKQIRS). A helical transmembrane segment spans residues 60–80 (LFSIAIGHLSLMLIEGSANLL). Topologically, residues 81-120 (SLEEISRTLLRILDFVGNKNMRTYLEVPLCRWHISQARPN) are cytoplasmic.

The protein resides in the membrane. This is an uncharacterized protein from Schizosaccharomyces pombe (strain 972 / ATCC 24843) (Fission yeast).